The chain runs to 950 residues: Serine/threonine-protein phosphatase 4 regulatory subunit 1 (950 aa).

HEAT repeat units follow at residues 1–25, 26–63, 65–81, 82–119, 127–164, 168–206, 208–246, 248–285, and 287–324; these read MADL…DYSS, ESDV…IFNR, MVAR…CDDE, RDCI…FCQE, AFSK…QELI, DVET…MVGK, ITER…VVGQ, ATEE…ATCQ, and IRRT…TFAN. 3 disordered regions span residues 326-374, 413-438, and 473-499; these read SSSG…SVSN, ESHQ…RPEV, and EQNS…SPNI. Residues 332–365 are compositionally biased toward basic and acidic residues; it reads FKEESKSSEEMSVENKNRTRDQEAPEDVQVRPED. HEAT repeat units follow at residues 505–542, 568–606, 698–734, 799–837, and 861–898; these read KELE…LDAH, INQE…FSPD, LTAA…LLHI, WISY…RCPK, and QFAV…EKDY. Serine 935 carries the post-translational modification Phosphoserine.

As to quaternary structure, serine/threonine-protein phosphatase 4 (PP4) occurs in different assemblies of the catalytic and one or more regulatory subunits. Component of the PP4 complex PPP4C-PPP4R1. Interacts with HDAC3. (Microbial infection) Interacts with merkel polyomavirus small tumor antigen; this interaction bridges small tumor antigen with NEMO to inhibit NF-kappa-B. As to expression, widely expressed with high expression in cultured mesangial cells. Isoform 1 and isoform 2 are expressed in renal tissues.

Its function is as follows. Regulatory subunit of serine/threonine-protein phosphatase 4. May play a role in regulation of cell division in renal glomeruli. The PPP4C-PPP4R1 PP4 complex may play a role in dephosphorylation and regulation of HDAC3. Plays a role in the inhibition of TNF-induced NF-kappa-B activation by regulating the dephosphorylation of TRAF2. Functionally, (Microbial infection) Participates in merkel polyomavirus-mediated inhibition of NF-kappa-B by bridging viral small tumor antigen with NEMO. The sequence is that of Serine/threonine-protein phosphatase 4 regulatory subunit 1 (PPP4R1) from Homo sapiens (Human).